The sequence spans 339 residues: MIKEYIRKITEGKDLSADEMKDLFNILMEGQATDAQIGAVLIGLKMKGESVEEISSAAQIMREKAVKVPVKDRSRLIDTCGTGGDKVDTFNVSTITAFVIAGAGVKVAKHGNRSVSSKCGSADIMEALGVKIDLSPEQAAEAIDRIGLGFLFAPVYHPAMKNVIRQRREIGVRTIFNILGPLSNPAGAKYQLLGVYDKDLVEPVARVLSLLGIERAYVVHGMEGLDEVSITTDTMVAEVDGGDISVYSVKPEDFGIERASLDDIRGGDLDFNLQIALDILEGKDRSRKTDFVSLNAGFAFHAVGVVDSVKEGIELAKETIYSKKAYEILEKLREYSKGG.

5-phospho-alpha-D-ribose 1-diphosphate is bound by residues Gly-81, 84–85 (GD), Thr-89, 91–94 (NVST), 109–117 (KHGNRSVSS), and Ser-121. Gly-81 serves as a coordination point for anthranilate. Ser-93 provides a ligand contact to Mg(2+). Residue Asn-112 coordinates anthranilate. An anthranilate-binding site is contributed by Arg-167. Positions 226 and 227 each coordinate Mg(2+).

This sequence belongs to the anthranilate phosphoribosyltransferase family. As to quaternary structure, homodimer. Mg(2+) serves as cofactor.

The catalysed reaction is N-(5-phospho-beta-D-ribosyl)anthranilate + diphosphate = 5-phospho-alpha-D-ribose 1-diphosphate + anthranilate. It functions in the pathway amino-acid biosynthesis; L-tryptophan biosynthesis; L-tryptophan from chorismate: step 2/5. Functionally, catalyzes the transfer of the phosphoribosyl group of 5-phosphorylribose-1-pyrophosphate (PRPP) to anthranilate to yield N-(5'-phosphoribosyl)-anthranilate (PRA). The protein is Anthranilate phosphoribosyltransferase of Persephonella marina (strain DSM 14350 / EX-H1).